A 69-amino-acid polypeptide reads, in one-letter code: MARYRHSRSRSRSRYRRRRRRRRSRYRGRRRRYRRSRRRRRRGRRRGNCLGRRGYRRRRYSRRRRRRYY.

Residues 1-69 (MARYRHSRSR…YSRRRRRRYY (69 aa)) are disordered.

Belongs to the protamine P1 family. Testis.

It is found in the nucleus. The protein localises to the chromosome. In terms of biological role, protamines substitute for histones in the chromatin of sperm during the haploid phase of spermatogenesis. They compact sperm DNA into a highly condensed, stable and inactive complex. The sequence is that of Sperm protamine P1 (PRM1) from Pseudochirops cupreus (Coppery ringtail).